The primary structure comprises 304 residues: Non-specific ribonucleoside hydrolase RihC (304 aa).

The active site involves His233.

Belongs to the IUNH family. RihC subfamily.

Its function is as follows. Hydrolyzes both purine and pyrimidine ribonucleosides with a broad-substrate specificity. The polypeptide is Non-specific ribonucleoside hydrolase RihC (Escherichia coli O157:H7).